The following is a 144-amino-acid chain: Group IID secretory phospholipase A2 (144 aa).

A signal peptide spans 1-19; sequence MRLALLCGLLLAGITATQG. 7 disulfides stabilise this stretch: Cys-45/Cys-137, Cys-47/Cys-63, Cys-62/Cys-117, Cys-68/Cys-144, Cys-69/Cys-110, Cys-78/Cys-103, and Cys-96/Cys-108. The Ca(2+) site is built by His-46, Gly-48, and Gly-50. Residue His-66 is part of the active site. A Ca(2+)-binding site is contributed by Asp-67. N-linked (GlcNAc...) asparagine glycosylation is present at Asn-99. Asp-111 is an active-site residue.

Belongs to the phospholipase A2 family. Requires Ca(2+) as cofactor. In terms of tissue distribution, highly expressed in secondary lymphoid tissues, spleen and lymph nodes. Expressed at a lesser extent in thymus. Expressed in CD4-positive, IL2RA/CD25-positive, FOXP3-positive Tregs (at protein level). Expressed in myeloid cell subsets resident in spleen and lymph nodes, ITGAX/CD11C-positive dendritic cells and macrophages (at protein level). Enriched in CD4-positive, ITGAM/CD11B-positive dendritic cell subset. Expressed in pulmonary ITGAX/CD11C-positive dendritic cell subset (at protein level).

Its subcellular location is the secreted. It localises to the cell membrane. The protein resides in the cytoplasm. It carries out the reaction a 1,2-diacyl-sn-glycero-3-phosphoethanolamine + H2O = a 1-acyl-sn-glycero-3-phosphoethanolamine + a fatty acid + H(+). The catalysed reaction is 1-hexadecanoyl-2-(9Z-octadecenoyl)-sn-glycero-3-phosphoethanolamine + H2O = 1-hexadecanoyl-sn-glycero-3-phosphoethanolamine + (9Z)-octadecenoate + H(+). The enzyme catalyses 1-hexadecanoyl-2-(9Z,12Z-octadecadienoyl)-sn-glycero-3-phosphoethanolamine + H2O = 1-hexadecanoyl-sn-glycero-3-phosphoethanolamine + (9Z,12Z)-octadecadienoate + H(+). It catalyses the reaction 1,2-dihexadecanoyl-sn-glycero-3-phospho-(1'-sn-glycerol) + H2O = 1-hexadecanoyl-sn-glycero-3-phospho-(1'-sn-glycerol) + hexadecanoate + H(+). It carries out the reaction 1-hexadecanoyl-2-(9Z-octadecenoyl)-sn-glycero-3-phospho-(1'-sn-glycerol) + H2O = 1-hexadecanoyl-sn-glycero-3-phospho-(1'-sn-glycerol) + (9Z)-octadecenoate + H(+). The catalysed reaction is a 1,2-diacyl-sn-glycero-3-phosphocholine + H2O = a 1-acyl-sn-glycero-3-phosphocholine + a fatty acid + H(+). The enzyme catalyses 1,2-dihexadecanoyl-sn-glycero-3-phosphocholine + H2O = 1-hexadecanoyl-sn-glycero-3-phosphocholine + hexadecanoate + H(+). It catalyses the reaction 1-hexadecanoyl-2-(9Z-octadecenoyl)-sn-glycero-3-phosphocholine + H2O = 1-hexadecanoyl-sn-glycero-3-phosphocholine + (9Z)-octadecenoate + H(+). It carries out the reaction 1-hexadecanoyl-2-(9Z,12Z-octadecadienoyl)-sn-glycero-3-phosphocholine + H2O = (9Z,12Z)-octadecadienoate + 1-hexadecanoyl-sn-glycero-3-phosphocholine + H(+). The catalysed reaction is 1-hexadecanoyl-2-(4Z,7Z,10Z,13Z,16Z,19Z-docosahexaenoyl)-sn-glycero-3-phosphocholine + H2O = (4Z,7Z,10Z,13Z,16Z,19Z)-docosahexaenoate + 1-hexadecanoyl-sn-glycero-3-phosphocholine + H(+). In terms of biological role, secretory calcium-dependent phospholipase A2 that primarily targets extracellular lipids, exerting anti-inflammatory and immunosuppressive functions. Hydrolyzes the ester bond of the fatty acyl group attached at sn-2 position of phospholipids (phospholipase A2 activity) with preference for phosphatidylethanolamines and phosphatidylglycerols over phosphatidylcholines. In draining lymph nodes, selectively hydrolyzes diacyl and alkenyl forms of phosphatidylethanolamines, releasing omega-3 polyunsaturated fatty acids (PUFAs) such as eicosapentaenoate and docosahexaenoate that are precursors of the anti-inflammatory lipid mediators, resolvins. During the resolution phase of acute inflammation drives docosahexaenoate-derived resolvin D1 synthesis, which suppresses dendritic cell activation and T-helper 1 immune response. May act in an autocrine and paracrine manner. Via a mechanism independent of its catalytic activity, promotes differentiation of regulatory T cells (Tregs) and participates in the maintenance of immune tolerance. May contribute to lipid remodeling of cellular membranes and generation of lipid mediators involved in pathogen clearance. Displays bactericidal activity against Gram-positive bacteria by directly hydrolyzing phospholipids of the bacterial membrane. In Mus musculus (Mouse), this protein is Group IID secretory phospholipase A2 (Pla2g2d).